The chain runs to 444 residues: MSELSAARELDEIAHTASEGWMIAGLIGGAIVGAALIAVTGGTAAVAVAAVVAGASAGGGLGEVLGSMSWAPRHVTGVLADGSPNVYINGRPAIRAHISTGECSEDGPAKKVVAQGSAKVYINDFPAARINDLLACSAEIHTGSPNVIIGGEKEQTDDIEPEIPDWVNWTLLAAGAGAAAVLATPAIAILGTLGGLGGGFAGSLIGGAFFGEGSDGQKWSMLAGGFVGGFAGGKGGAKFDAWRNTKIVEPPPRVTTKVDPISPPRMTLAEAVGQEQAKVWTQTARANAEKNNAQLSTLLTDDQIGAIYGYTTNEGYTALNPALRGQTPLTPELEAFTGHVTDGLNKLPAYNGETYRGTTLPAHILEQNQIGGTVSDGGFMSTSAKTPFDGDVSISVRGNSGKQIDFLSKYKNEAEVLYPPNTRFEVINRIEQNGTTHLLYREIP.

Residues 72 to 140 (PRHVTGVLAD…NDLLACSAEI (69 aa)) are PAAR domain. The 179-residue stretch at 266-444 (MTLAEAVGQE…TTHLLYREIP (179 aa)) folds into the TR mART core domain. Residues 274–444 (QEQAKVWTQT…TTHLLYREIP (171 aa)) are ART domain. Active-site residues include Arg356, Ser381, and Glu415.

Belongs to the Arg-specific ADP-ribosyltransferase family. Forms a stable complex with cognate immunity protein Tri1-Sp.

Its subcellular location is the secreted. It localises to the host cytoplasm. The catalysed reaction is L-arginyl-[protein] + NAD(+) = N(omega)-(ADP-D-ribosyl)-L-arginyl-[protein] + nicotinamide + H(+). Functionally, toxic component of a contact-dependent interbacterial competition system (also called effector-immunity systems). Acts by ADP-ribosylating a number of target proteins in target cells; E.coli target proteins include FtsZ, EFTu, RNase E, Fis, RL9, SucB, and LolD. FtsZ is thought to be the physiologically relevant target as it is ADP-ribosylated on a critical residue. ADP-ribosylation of FtsZ prevents formation of the FtsZ mid-cell ring and inhibits cell division. Overexpression of the whole Tre1 protein or the ART domain in E.coli is toxic; cells elongate dramatically and some undergo lysis. Toxic activity is neutralized by coexpression of the cognate immunity protein Tri1-Sp; Tri1-Sp neutralizes this protein both by binding to and occluding the active site (via Tri1's N-terminal extension) and by hydrolysis of the ADP-ribosyl moiety from the target protein. Tre1 can also be neutralized by non-cognate immunity protein Tri1-Pp from P.putida strain GB-1, with which it does not form a stable complex; DraG of R.palustris does not neutralize the toxic effects of this protein. In interbacterial competition studies Tri1 from P.putida strain B6-2 also neutralizes this protein. This Serratia proteamaculans (strain 568) protein is NAD(+)--protein-arginine ADP-ribosyltransferase Tre1.